The following is a 274-amino-acid chain: Aspartate/glutamate leucyltransferase (274 aa).

It belongs to the R-transferase family. Bpt subfamily.

Its subcellular location is the cytoplasm. The enzyme catalyses N-terminal L-glutamyl-[protein] + L-leucyl-tRNA(Leu) = N-terminal L-leucyl-L-glutamyl-[protein] + tRNA(Leu) + H(+). The catalysed reaction is N-terminal L-aspartyl-[protein] + L-leucyl-tRNA(Leu) = N-terminal L-leucyl-L-aspartyl-[protein] + tRNA(Leu) + H(+). Functions in the N-end rule pathway of protein degradation where it conjugates Leu from its aminoacyl-tRNA to the N-termini of proteins containing an N-terminal aspartate or glutamate. This chain is Aspartate/glutamate leucyltransferase, found in Ruegeria sp. (strain TM1040) (Silicibacter sp.).